A 278-amino-acid chain; its full sequence is Phosphonates import ATP-binding protein PhnC 1 (278 aa).

The region spanning 5–253 is the ABC transporter domain; it reads IRVDSLNKTF…FLNELYGAEG (249 aa). 37–44 provides a ligand contact to ATP; it reads GASGSGKS.

It belongs to the ABC transporter superfamily. Phosphonates importer (TC 3.A.1.9.1) family. In terms of assembly, the complex is composed of two ATP-binding proteins (PhnC), two transmembrane proteins (PhnE) and a solute-binding protein (PhnD).

Its subcellular location is the cell inner membrane. It carries out the reaction phosphonate(out) + ATP + H2O = phosphonate(in) + ADP + phosphate + H(+). Functionally, part of the ABC transporter complex PhnCDE involved in phosphonates import. Responsible for energy coupling to the transport system. This Pseudomonas aeruginosa (strain UCBPP-PA14) protein is Phosphonates import ATP-binding protein PhnC 1.